The following is a 587-amino-acid chain: Phosphatidate phosphatase APP1 (587 aa).

2 disordered regions span residues 1-28 (MNSQ…RMGK) and 150-178 (PPHL…SENR). Composition is skewed to low complexity over residues 9–22 (SSSS…PTSG) and 163–174 (SQSSIESSLSSK). The short motif at 281 to 285 (DIDDT) is the DXDXT motif element. Residues 452–521 (QQRPMQMTKS…NRQLPNLDAN (70 aa)) form a disordered region. Residues 467–483 (RRPPPPPIPSTQKPSLT) form an interaction with SH3 domain of ABP1 region.

Monomer. Interacts with ABP1. The cofactor is Mg(2+). N-glycosylated.

The protein localises to the cytoplasm. It is found in the cytoskeleton. The protein resides in the actin patch. It carries out the reaction a 1,2-diacyl-sn-glycero-3-phosphate + H2O = a 1,2-diacyl-sn-glycerol + phosphate. It catalyses the reaction 1,2-di-(9Z-octadecenoyl)-sn-glycero-3-phosphate + H2O = 1,2-di-(9Z-octadecenoyl)-sn-glycerol + phosphate. Its activity is regulated as follows. Inhibited by N-ethylmaleimide. Mg(2+)-dependent phosphatidate (PA) phosphatase which catalyzes the dephosphorylation of PA to yield diacylglycerol. May play a role in vesicular trafficking through its PAP activity at cortical actin patches. Can also utilize diacylglycerol pyrophosphate and lyso-PA as substrates with specificity constants 4- and 7-fold lower, respectively, when compared with PA. The protein is Phosphatidate phosphatase APP1 (APP1) of Saccharomyces cerevisiae (strain ATCC 204508 / S288c) (Baker's yeast).